The chain runs to 602 residues: Elongation factor 4 (602 aa).

A tr-type G domain is found at 7-189; it reads KFIRNFSIIA…QLVVAIPPPV (183 aa). GTP is bound by residues 19 to 24 and 136 to 139; these read DHGKST and NKID.

The protein belongs to the TRAFAC class translation factor GTPase superfamily. Classic translation factor GTPase family. LepA subfamily.

Its subcellular location is the cell inner membrane. The enzyme catalyses GTP + H2O = GDP + phosphate + H(+). In terms of biological role, required for accurate and efficient protein synthesis under certain stress conditions. May act as a fidelity factor of the translation reaction, by catalyzing a one-codon backward translocation of tRNAs on improperly translocated ribosomes. Back-translocation proceeds from a post-translocation (POST) complex to a pre-translocation (PRE) complex, thus giving elongation factor G a second chance to translocate the tRNAs correctly. Binds to ribosomes in a GTP-dependent manner. The protein is Elongation factor 4 of Coxiella burnetii (strain RSA 493 / Nine Mile phase I).